We begin with the raw amino-acid sequence, 429 residues long: 3-phosphoshikimate 1-carboxyvinyltransferase (429 aa).

3-phosphoshikimate-binding residues include K22, S23, and R27. Position 22 (K22) interacts with phosphoenolpyruvate. Phosphoenolpyruvate is bound by residues G94 and R122. 3-phosphoshikimate-binding residues include S167, Q169, D315, and K342. Q169 serves as a coordination point for phosphoenolpyruvate. D315 functions as the Proton acceptor in the catalytic mechanism. Residues R346 and R388 each contribute to the phosphoenolpyruvate site.

It belongs to the EPSP synthase family. As to quaternary structure, monomer.

The protein resides in the cytoplasm. The catalysed reaction is 3-phosphoshikimate + phosphoenolpyruvate = 5-O-(1-carboxyvinyl)-3-phosphoshikimate + phosphate. It functions in the pathway metabolic intermediate biosynthesis; chorismate biosynthesis; chorismate from D-erythrose 4-phosphate and phosphoenolpyruvate: step 6/7. Its function is as follows. Catalyzes the transfer of the enolpyruvyl moiety of phosphoenolpyruvate (PEP) to the 5-hydroxyl of shikimate-3-phosphate (S3P) to produce enolpyruvyl shikimate-3-phosphate and inorganic phosphate. The sequence is that of 3-phosphoshikimate 1-carboxyvinyltransferase from Geobacter sp. (strain M21).